The sequence spans 582 residues: Transcription factor PCF5 (582 aa).

2 disordered regions span residues 30–78 (AAGK…QHDH) and 123–195 (SPMG…GGGG). The span at 51-64 (GGDGGGVGGGGSGG) shows a compositional bias: gly residues. A TCP domain is found at 213-271 (RKDRHSKVCTARGPRDRRVRLSAHTAIQFYDVQDRLGYDRPSKAVDWLIKNAKDAIDKL). Disordered stretches follow at residues 283 to 306 (GAGA…ENSD), 402 to 423 (MFHH…TTQQ), and 548 to 582 (RLPA…ASHH).

In terms of assembly, forms homodimers and heterodimers with PCF2.

The protein localises to the nucleus. Functionally, transcription activator. Binds the promoter core sequence 5'-GGNCC-3'. The sequence is that of Transcription factor PCF5 (PCF5) from Oryza sativa subsp. indica (Rice).